A 65-amino-acid chain; its full sequence is Defensin-B2 (65 aa).

Positions 1 to 23 (MEARVLLLCAVLFLLVHTPPAAG) are cleaved as a signal peptide. Intrachain disulfides connect Cys-29–Cys-56, Cys-36–Cys-50, and Cys-40–Cys-57.

It belongs to the beta-defensin family. Lowly expressed in spleen, and lung.

It is found in the secreted. Has antimicrobial activity. The protein is Defensin-B2 of Ornithorhynchus anatinus (Duckbill platypus).